We begin with the raw amino-acid sequence, 264 residues long: Tryptophan synthase alpha chain (264 aa).

Active-site proton acceptor residues include glutamate 49 and aspartate 60.

The protein belongs to the TrpA family. Tetramer of two alpha and two beta chains.

The catalysed reaction is (1S,2R)-1-C-(indol-3-yl)glycerol 3-phosphate + L-serine = D-glyceraldehyde 3-phosphate + L-tryptophan + H2O. The protein operates within amino-acid biosynthesis; L-tryptophan biosynthesis; L-tryptophan from chorismate: step 5/5. The alpha subunit is responsible for the aldol cleavage of indoleglycerol phosphate to indole and glyceraldehyde 3-phosphate. The chain is Tryptophan synthase alpha chain from Geotalea daltonii (strain DSM 22248 / JCM 15807 / FRC-32) (Geobacter daltonii).